Here is a 950-residue protein sequence, read N- to C-terminus: UvrABC system protein A (950 aa).

Residue 36-43 (GKSGSGKS) participates in ATP binding. The segment at 260 to 287 (CPLCGFSLPLIEPRLFSFNSPFGACSEC) adopts a C4-type zinc-finger fold. ABC transporter domains are found at residues 317–599 (FKTS…KNSL) and 619–947 (ADKG…MFLK). 651–658 (GVSGSGKS) is a binding site for ATP. Residues 750–776 (CEKCQGDGYLNIQMHFLPDVFVPCDLC) form a C4-type zinc finger.

This sequence belongs to the ABC transporter superfamily. UvrA family. Forms a heterotetramer with UvrB during the search for lesions.

The protein localises to the cytoplasm. Its function is as follows. The UvrABC repair system catalyzes the recognition and processing of DNA lesions. UvrA is an ATPase and a DNA-binding protein. A damage recognition complex composed of 2 UvrA and 2 UvrB subunits scans DNA for abnormalities. When the presence of a lesion has been verified by UvrB, the UvrA molecules dissociate. This chain is UvrABC system protein A, found in Borreliella burgdorferi (strain ATCC 35210 / DSM 4680 / CIP 102532 / B31) (Borrelia burgdorferi).